Consider the following 486-residue polypeptide: Protein nucleotidyltransferase YdiU (486 aa).

ATP-binding residues include G90, G92, R93, K113, D125, G126, R176, and R183. The active-site Proton acceptor is D252. Positions 253 and 262 each coordinate Mg(2+). D262 lines the ATP pocket.

This sequence belongs to the SELO family. Requires Mg(2+) as cofactor. It depends on Mn(2+) as a cofactor.

It catalyses the reaction L-seryl-[protein] + ATP = 3-O-(5'-adenylyl)-L-seryl-[protein] + diphosphate. It carries out the reaction L-threonyl-[protein] + ATP = 3-O-(5'-adenylyl)-L-threonyl-[protein] + diphosphate. The enzyme catalyses L-tyrosyl-[protein] + ATP = O-(5'-adenylyl)-L-tyrosyl-[protein] + diphosphate. The catalysed reaction is L-histidyl-[protein] + UTP = N(tele)-(5'-uridylyl)-L-histidyl-[protein] + diphosphate. It catalyses the reaction L-seryl-[protein] + UTP = O-(5'-uridylyl)-L-seryl-[protein] + diphosphate. It carries out the reaction L-tyrosyl-[protein] + UTP = O-(5'-uridylyl)-L-tyrosyl-[protein] + diphosphate. In terms of biological role, nucleotidyltransferase involved in the post-translational modification of proteins. It can catalyze the addition of adenosine monophosphate (AMP) or uridine monophosphate (UMP) to a protein, resulting in modifications known as AMPylation and UMPylation. This is Protein nucleotidyltransferase YdiU from Pseudomonas aeruginosa (strain ATCC 15692 / DSM 22644 / CIP 104116 / JCM 14847 / LMG 12228 / 1C / PRS 101 / PAO1).